We begin with the raw amino-acid sequence, 336 residues long: PTS system glucitol/sorbitol-specific EIIB component (336 aa).

A PTS EIIB type-5 domain is found at 3 to 195 (KYNAIKIVKG…AVQSMITTIL (193 aa)). The active-site Phosphocysteine intermediate; for EIIB activity is the C75. A Phosphocysteine; by EIIA modification is found at C75. 5 helical membrane passes run 194–214 (ILPF…SGFG), 228–248 (GIGL…ALLG), 250–270 (GAVI…KGTI), 278–298 (ALFA…LGLA), and 312–332 (VLYS…VASI).

It localises to the cell membrane. The enzyme catalyses D-sorbitol(out) + N(pros)-phospho-L-histidyl-[protein] = D-sorbitol 6-phosphate(in) + L-histidyl-[protein]. Functionally, the phosphoenolpyruvate-dependent sugar phosphotransferase system (sugar PTS), a major carbohydrate active transport system, catalyzes the phosphorylation of incoming sugar substrates concomitantly with their translocation across the cell membrane. The enzyme II complex composed of SrlA, SrlB and SrlE is involved in glucitol/sorbitol transport. This Clostridium beijerinckii (strain ATCC 51743 / NCIMB 8052) (Clostridium acetobutylicum) protein is PTS system glucitol/sorbitol-specific EIIB component (srlE).